Consider the following 78-residue polypeptide: Large ribosomal subunit protein bL28 (78 aa).

The protein belongs to the bacterial ribosomal protein bL28 family.

This is Large ribosomal subunit protein bL28 from Clavibacter michiganensis subsp. michiganensis (strain NCPPB 382).